A 106-amino-acid chain; its full sequence is uncharacterized protein (106 aa).

Positions 1–93 constitute an HTH hxlR-type domain; the sequence is MSIFYVLGKK…WEAKWKEAKI (93 aa).

This is an uncharacterized protein from Methanocaldococcus jannaschii (strain ATCC 43067 / DSM 2661 / JAL-1 / JCM 10045 / NBRC 100440) (Methanococcus jannaschii).